The following is a 430-amino-acid chain: 3-phosphoshikimate 1-carboxyvinyltransferase (430 aa).

The disordered stretch occupies residues 1–20 (MHATVSPSRVRGRARAPPSK). 3-phosphoshikimate is bound by residues Lys-20, Ser-21, and Arg-25. Lys-20 contacts phosphoenolpyruvate. The phosphoenolpyruvate site is built by Gly-91 and Arg-119. Residues Ser-164, Ser-165, Gln-166, Ser-192, Asp-312, and Lys-339 each coordinate 3-phosphoshikimate. A phosphoenolpyruvate-binding site is contributed by Gln-166. Asp-312 functions as the Proton acceptor in the catalytic mechanism. Positions 343 and 386 each coordinate phosphoenolpyruvate.

The protein belongs to the EPSP synthase family. Monomer.

Its subcellular location is the cytoplasm. The catalysed reaction is 3-phosphoshikimate + phosphoenolpyruvate = 5-O-(1-carboxyvinyl)-3-phosphoshikimate + phosphate. The protein operates within metabolic intermediate biosynthesis; chorismate biosynthesis. In terms of biological role, catalyzes the transfer of the enolpyruvyl moiety of phosphoenolpyruvate (PEP) to the 5-hydroxyl of shikimate-3-phosphate (S3P) to produce enolpyruvyl shikimate-3-phosphate and inorganic phosphate. In Halobacterium salinarum (strain ATCC 29341 / DSM 671 / R1), this protein is 3-phosphoshikimate 1-carboxyvinyltransferase.